Here is a 385-residue protein sequence, read N- to C-terminus: Protein pelota homolog (385 aa).

A Glycyl lysine isopeptide (Lys-Gly) (interchain with G-Cter in SUMO2) cross-link involves residue lysine 162. A phosphoserine mark is found at serine 374, serine 380, serine 381, and serine 382.

It belongs to the eukaryotic release factor 1 family. Pelota subfamily. As to quaternary structure, component of the Pelota-HBS1L complex, also named Dom34-Hbs1 complex, composed of PELO and HBS1L. Interacts with PINK1. Interacts with ABCE1. Interacts with CNOT4. The cofactor is a divalent metal cation. Ubiquitously expressed.

It localises to the cytoplasm. Functionally, component of the Pelota-HBS1L complex, a complex that recognizes stalled ribosomes and triggers the No-Go Decay (NGD) pathway. In the Pelota-HBS1L complex, PELO recognizes ribosomes stalled at the 3' end of an mRNA and engages stalled ribosomes by destabilizing mRNA in the mRNA channel. Following mRNA extraction from stalled ribosomes by the SKI complex, the Pelota-HBS1L complex promotes recruitment of ABCE1, which drives the disassembly of stalled ribosomes, followed by degradation of damaged mRNAs as part of the NGD pathway. As part of the PINK1-regulated signaling, upon mitochondrial damage is recruited to the ribosome/mRNA-ribonucleoprotein complex associated to mitochondrial outer membrane thereby enabling the recruitment of autophagy receptors and induction of mitophagy. In Mus musculus (Mouse), this protein is Protein pelota homolog.